Consider the following 334-residue polypeptide: Serine/Arginine-related protein 53 (334 aa).

Residues methionine 1 to arginine 13 are compositionally biased toward basic and acidic residues. 3 disordered regions span residues methionine 1–proline 179, aspartate 198–alanine 220, and arginine 246–threonine 290. Positions serine 14–serine 24 are enriched in basic residues. The span at proline 44–tyrosine 62 shows a compositional bias: basic and acidic residues. The span at serine 78–serine 118 shows a compositional bias: basic residues. Basic and acidic residues-rich tracts occupy residues arginine 132–aspartate 166, aspartate 198–aspartate 218, and serine 247–glutamate 256. Positions alanine 180 to glutamate 236 form a coiled coil. The segment covering alanine 265 to serine 278 has biased composition (low complexity).

Interacts (via Arg/Ser-rich domain) with LUC7L3, RBM39 and RSF1. Phosphorylated.

It localises to the nucleus. Its subcellular location is the nucleus speckle. The protein localises to the cytoplasm. Plays a role in pre-mRNA splicing. Involved in both constitutive and alternative pre-mRNA splicing. May have a role in the recognition of the 3' splice site during the second step of splicing. This chain is Serine/Arginine-related protein 53 (Rsrc1), found in Mus musculus (Mouse).